A 720-amino-acid chain; its full sequence is Calcium/calmodulin-dependent protein kinase type II (720 aa).

The 258-residue stretch at 12 to 269 folds into the Protein kinase domain; the sequence is YDVKEELGKG…ADQALKVPWI (258 aa). ATP is bound by residues 18 to 26 and lysine 41; that span reads LGKGAFSVV. Aspartate 134 acts as the Proton acceptor in catalysis. Threonine 284 is subject to Phosphothreonine; by autocatalysis. Disordered stretches follow at residues 317–345 and 504–586; these read SDSTGSVASNGSTTHDASQVAGTSSQPTS and DNLS…NLSA. 2 stretches are compositionally biased toward polar residues: residues 504-514 and 526-540; these read DNLSASTSSDL and PPSTIKESSESSQTI. The segment covering 569-586 has biased composition (low complexity); sequence SSSNSSTASKSSSTNLSA.

Belongs to the protein kinase superfamily. CAMK Ser/Thr protein kinase family. CaMK subfamily. As to quaternary structure, dodecamer. Subunits are tightly packed around a central ring-shaped scaffold with extensive contacts between the regulatory segment of one kinase and the catalytic domain of another enabling cooperative activation of a subunit by the adjacent molecule. Interacts with and phosphorylates daf-16; the interaction promotes daf-16 nuclear localization. Interacts with egl-2 and tir-1. Interacts with nsy-1. Mg(2+) serves as cofactor. Expressed in the nervous system. Observed in the ADF and AWC neurons. Position in AWC neurons is regulated by microtubules. Localized to clusters in ventral cord neurites which appear to be required for glr-1 trafficking. Also present in oocytes.

The protein resides in the cytoplasm. It is found in the cell projection. Its subcellular location is the axon. It localises to the perikaryon. It catalyses the reaction L-seryl-[protein] + ATP = O-phospho-L-seryl-[protein] + ADP + H(+). The enzyme catalyses L-threonyl-[protein] + ATP = O-phospho-L-threonyl-[protein] + ADP + H(+). With respect to regulation, ca2(+)/calmodulin binding removes an autoinhibitory regulatory segment located C-terminal to the kinase domain. This releases the catalytic activity of the enzyme and makes accessible a regulatory residue Thr-284. Phosphorylation of Thr-284 by another kinase domain within the oligomeric holoenzyme keeps CaMKII active in the absence of Ca(2+)/calmodulin by preventing the rebinding of the regulatory segment to the kinase domain and by increasing the affinity of calmodulin for the enzyme. Can respond to high-frequency Ca(2+) pulses to become Ca(2+) independent. Its function is as follows. Acts in the signaling of a variety of pathways and processes. Phosphorylates 'Ser-319' of daf-16 in response to stress signals, such as heat, starvation and oxidation, which plays a role in prolonging lifespan. Required for viability under chronic osmotic stress in which it acts downstream of osr-1. Has roles in locomotion, oocyte maturation, brood size, egg laying, defecation, meiotic maturation and neuronal cell fate specification. Required for the regulation of synaptic density and neuromuscular junction morphology. Regulates the synaptic trafficking of glr-1. Bidirectional modulator of neurotransmitter release with negative modulatory effects mainly mediated via slo-1 activation. Involved in activation of ADF neurons and increased tph-1 transcription following exposure to pathogenic bacteria which leads to learned olfactory aversion to the bacteria. Implicated in the muscle regulation of spicule protraction. In conjunction with egl-2 has a role in the suppression of mating behavior under food deprivation to encourage foraging. Involved in restricting str-2 expression to only one of the two AWC neurons. May suppress the functional response to an internal pacemaker, perhaps by modulating the activity of the IP3 receptor. The sequence is that of Calcium/calmodulin-dependent protein kinase type II (unc-43) from Caenorhabditis elegans.